We begin with the raw amino-acid sequence, 316 residues long: N-acetylmuramic acid 6-phosphate etherase (316 aa).

Residues 68–231 (ITDRLRSGGR…STCAMVRLGK (164 aa)) enclose the SIS domain. The Proton donor role is filled by glutamate 96. Glutamate 127 is a catalytic residue.

It belongs to the GCKR-like family. MurNAc-6-P etherase subfamily. As to quaternary structure, homodimer.

It catalyses the reaction N-acetyl-D-muramate 6-phosphate + H2O = N-acetyl-D-glucosamine 6-phosphate + (R)-lactate. It participates in amino-sugar metabolism; N-acetylmuramate degradation. Its function is as follows. Specifically catalyzes the cleavage of the D-lactyl ether substituent of MurNAc 6-phosphate, producing GlcNAc 6-phosphate and D-lactate. The sequence is that of N-acetylmuramic acid 6-phosphate etherase from Prochlorococcus marinus (strain MIT 9313).